Consider the following 93-residue polypeptide: Integration host factor subunit beta (93 aa).

It belongs to the bacterial histone-like protein family. In terms of assembly, heterodimer of an alpha and a beta chain.

Functionally, this protein is one of the two subunits of integration host factor, a specific DNA-binding protein that functions in genetic recombination as well as in transcriptional and translational control. The protein is Integration host factor subunit beta of Glaesserella parasuis serovar 5 (strain SH0165) (Haemophilus parasuis).